Consider the following 138-residue polypeptide: Cysteine desulfuration protein SufE (138 aa).

Cys51 serves as the catalytic Cysteine persulfide intermediate.

It belongs to the SufE family. In terms of assembly, homodimer. Interacts with SufS.

The protein localises to the cytoplasm. It participates in cofactor biosynthesis; iron-sulfur cluster biosynthesis. In terms of biological role, participates in cysteine desulfuration mediated by SufS. Cysteine desulfuration mobilizes sulfur from L-cysteine to yield L-alanine and constitutes an essential step in sulfur metabolism for biosynthesis of a variety of sulfur-containing biomolecules. Functions as a sulfur acceptor for SufS, by mediating the direct transfer of the sulfur atom from the S-sulfanylcysteine of SufS, an intermediate product of cysteine desulfuration process. The sequence is that of Cysteine desulfuration protein SufE from Salmonella choleraesuis (strain SC-B67).